Here is a 522-residue protein sequence, read N- to C-terminus: Peptide chain release factor 3 (522 aa).

In terms of domain architecture, tr-type G spans 10–277 (ASRKTFAIIS…TFVDFAPSPS (268 aa)). Residues 19-26 (SHPDAGKT), 87-91 (DTPGH), and 141-144 (NKMD) each bind GTP.

The protein belongs to the TRAFAC class translation factor GTPase superfamily. Classic translation factor GTPase family. PrfC subfamily.

The protein localises to the cytoplasm. In terms of biological role, increases the formation of ribosomal termination complexes and stimulates activities of RF-1 and RF-2. It binds guanine nucleotides and has strong preference for UGA stop codons. It may interact directly with the ribosome. The stimulation of RF-1 and RF-2 is significantly reduced by GTP and GDP, but not by GMP. This Listeria innocua serovar 6a (strain ATCC BAA-680 / CLIP 11262) protein is Peptide chain release factor 3.